A 438-amino-acid polypeptide reads, in one-letter code: Innexin inx7 (438 aa).

Residues 1-23 (MLNTFSSVRQYLKFDLTRVVIDN) lie on the Cytoplasmic side of the membrane. Residues 24–44 (IVFKLHYRWTFVILLVATLLI) traverse the membrane as a helical segment. The Extracellular portion of the chain corresponds to 45-58 (TSRQYIGEHIQCLS). Residues 59-79 (DGVVSPVINTFCFFTPTFTVV) form a helical membrane-spanning segment. Over 80 to 112 (RDQNQTAYRPGSEPPGIGAFDPEKDTIKRHAYY) the chain is Cytoplasmic. Residues 113 to 133 (QWVPFVLFFQALCFYIPHALW) form a helical membrane-spanning segment. Over 134–283 (KSWEGGRIKA…VMALNIMNEK (150 aa)) the chain is Extracellular. The chain crosses the membrane as a helical span at residues 284–304 (IYIILWFWYAFLLIVTVLGLL). The Cytoplasmic portion of the chain corresponds to 305–438 (WRILTLCFYR…STSDMAKLPV (134 aa)). Disordered stretches follow at residues 381 to 402 (NDVN…PELS) and 415 to 438 (RRNG…KLPV). Over residues 418 to 431 (GSPSAGGAQGPSTS) the composition is skewed to low complexity.

It belongs to the pannexin family. Expressed around gut lobes in embryonic stages 15-17.

It is found in the cell membrane. Its subcellular location is the cell junction. The protein localises to the gap junction. Functionally, structural components of the gap junctions. The sequence is that of Innexin inx7 (Inx7) from Drosophila melanogaster (Fruit fly).